Reading from the N-terminus, the 189-residue chain is ADP-ribosylation factor H (189 aa).

GTP-binding positions include 34–40, 75–79, and 134–137; these read DGAGKST, DVGGQ, and NKQD.

The protein belongs to the small GTPase superfamily. Arf family.

It localises to the golgi apparatus. GTP-binding protein that may be involved in protein trafficking. May modulate vesicle budding and uncoating within the Golgi apparatus. In Dictyostelium discoideum (Social amoeba), this protein is ADP-ribosylation factor H (arrH).